We begin with the raw amino-acid sequence, 395 residues long: Multidrug resistance protein MdtL (395 aa).

Transmembrane regions (helical) follow at residues 4-24, 42-62, 69-89, 93-113, 131-151, 158-178, 217-237, 247-267, 271-291, 295-315, 333-353, and 358-378; these read FLLC…MYLV, IAFS…GKIA, PVAI…SRAS, LFLS…VVAF, LLNG…HLIM, SLFY…LFIL, VSVI…VMGF, ALTA…LGLF, TLML…SLAH, VTLF…GVAM, LGIA…ILGI, and MLIG…FSVA.

The protein belongs to the major facilitator superfamily. DHA1 family. MdtL (TC 2.A.1.2.22) subfamily.

It is found in the cell inner membrane. This chain is Multidrug resistance protein MdtL, found in Salmonella agona (strain SL483).